Reading from the N-terminus, the 1836-residue chain is Sodium channel protein type 4 subunit alpha (1836 aa).

Over 1–131 the chain is Cytoplasmic; it reads MARPSLCTLV…RGAIKVLIHA (131 aa). Positions 39 to 60 are enriched in basic and acidic residues; that stretch reads LQRNKQMEIEEPERKPRSDLEA. A disordered region spans residues 39-63; it reads LQRNKQMEIEEPERKPRSDLEAGKN. The stretch at 113-454 is one I repeat; sequence LLSPFSVVRR…VVAMAYAEQN (342 aa). A helical transmembrane segment spans residues 132-150; the sequence is LFSMFIMITILTNCVFMTM. At 151–157 the chain is on the extracellular side; it reads SDPPPWS. The helical transmembrane segment at 158–178 threads the bilayer; that stretch reads KNVEYTFTGIYTFESLIKILA. Over 179–192 the chain is Cytoplasmic; sequence RGFCVDDFTFLRDP. Residues 193-210 traverse the membrane as a helical segment; sequence WNWLDFSVIMMAYLTEFV. Over 211-216 the chain is Extracellular; it reads DLGNIS. N214 is a glycosylation site (N-linked (GlcNAc...) asparagine). The chain crosses the membrane as a helical span at residues 217 to 233; it reads ALRTFRVLRALKTITVI. At 234–252 the chain is on the cytoplasmic side; sequence PGLKTIVGALIQSVKKLSD. The helical transmembrane segment at 253–272 threads the bilayer; that stretch reads VMILTVFCLSVFALVGLQLF. Topologically, residues 273 to 391 are extracellular; that stretch reads MGNLRQKCVR…PNYGYTSYDT (119 aa). Cysteines 280 and 360 form a disulfide. Residues N288, N291, N297, N303, N315, N321, N333, and N362 are each glycosylated (N-linked (GlcNAc...) asparagine). Cysteines 369 and 375 form a disulfide. The pore-forming intramembrane region spans 392-416; the sequence is FSWAFLALFRLMTQDYWENLFQLTL. The Extracellular portion of the chain corresponds to 417-423; that stretch reads RAAGKTY. The chain crosses the membrane as a helical span at residues 424–444; the sequence is MIFFVVIIFLGSFYLINLILA. Over 445-578 the chain is Cytoplasmic; it reads VVAMAYAEQN…NIIHLIVMDP (134 aa). Residues 493–530 form a disordered region; it reads GGEADGDPAHGKDCNGSLDTSQGEKGAPRQSSSGDSGI. The segment covering 509–528 has biased composition (polar residues); sequence SLDTSQGEKGAPRQSSSGDS. The stretch at 560–832 is one II repeat; the sequence is CCAPWLKFKN…QIAIGRIKLG (273 aa). The helical transmembrane segment at 579 to 597 threads the bilayer; it reads FVDLGITICIVLNTLFMAM. The Extracellular segment spans residues 598–608; it reads EHYPMTEHFDN. The chain crosses the membrane as a helical span at residues 609–628; sequence VLTVGNLVFTGIFTAEMVLK. The Cytoplasmic segment spans residues 629–642; it reads LIAMDPYEYFQQGW. Residues 643-662 traverse the membrane as a helical segment; that stretch reads NIFDSIIVTLSLVELGLANV. The Extracellular portion of the chain corresponds to 663–664; that stretch reads QG. The chain crosses the membrane as a helical span at residues 665–682; the sequence is LSVLRSFRLLRVFKLAKS. At 683–698 the chain is on the cytoplasmic side; it reads WPTLNMLIKIIGNSVG. A helical membrane pass occupies residues 699–717; sequence ALGNLTLVLAIIVFIFAVV. Residues 718-746 are Extracellular-facing; that stretch reads GMQLFGKSYKECVCKIALDCNLPRWHMHD. C731 and C737 are disulfide-bonded. Positions 747–767 form an intramembrane region, pore-forming; the sequence is FFHSFLIVFRILCGEWIETMW. At 768 to 778 the chain is on the extracellular side; the sequence is DCMEVAGQAMC. A disulfide bond links C769 and C778. A helical transmembrane segment spans residues 779–797; the sequence is LTVFLMVMVIGNLVVLNLF. At 798–1032 the chain is on the cytoplasmic side; that stretch reads LALLLSSFSA…ACFKIVEHNW (235 aa). Disordered regions lie at residues 863 to 885 and 930 to 992; these read GAGE…PPEE and ESDL…QPEE. The segment covering 876–885 has biased composition (basic and acidic residues); it reads EDEKKEPPEE. 2 stretches are compositionally biased toward acidic residues: residues 930–947 and 975–992; these read ESDL…FSEP and EDPE…QPEE. An III repeat occupies 1013–1326; it reads RGKKWWTLRR…KKYYNAMKKL (314 aa). A helical transmembrane segment spans residues 1033 to 1050; sequence FETFIVFMILLSSGALAF. At 1051-1063 the chain is on the extracellular side; the sequence is EDIYIEQRRVIRT. A helical transmembrane segment spans residues 1064 to 1082; sequence ILEYADKVFTYIFIMEMLL. Residues 1083 to 1096 are Cytoplasmic-facing; it reads KWVAYGFKVYFTNA. The helical transmembrane segment at 1097-1115 threads the bilayer; it reads WCWLDFLIVDVSIISLVAN. Residues 1116–1123 lie on the Extracellular side of the membrane; the sequence is WLGYSELG. Residues 1124–1142 traverse the membrane as a helical segment; it reads PIKSLRTLRALRPLRALSR. The Cytoplasmic portion of the chain corresponds to 1143-1159; sequence FEGMRVVVNALLGAIPS. The helical transmembrane segment at 1160–1179 threads the bilayer; sequence IMNVLLVCLIFWLIFSIMGV. The Extracellular portion of the chain corresponds to 1180 to 1230; it reads NLFAGKFYYCINTTTSERFDISEVNNKSECESLMHTGQVRWLNVKVNYDNV. Cysteines 1189 and 1209 form a disulfide. N1191 and N1205 each carry an N-linked (GlcNAc...) asparagine glycan. The pore-forming intramembrane region spans 1231–1252; it reads GLGYLSLLQVATFKGWMDIMYA. The Extracellular portion of the chain corresponds to 1253–1269; the sequence is AVDSREKEEQPQYEVNL. A helical membrane pass occupies residues 1270–1291; the sequence is YMYLYFVIFIIFGSFFTLNLFI. The Cytoplasmic portion of the chain corresponds to 1292–1354; that stretch reads GVIIDNFNQQ…MVYDLVTKQA (63 aa). Residues 1310 to 1312 form an important for rapid channel inactivation region; the sequence is IFM. The stretch at 1335-1633 is one IV repeat; the sequence is IPRPQNKIQG…WEKFDPDATQ (299 aa). Residues 1355–1372 form a helical membrane-spanning segment; that stretch reads FDITIMILICLNMVTMMV. The Extracellular portion of the chain corresponds to 1373-1383; the sequence is ETDNQSQLKVD. Residues 1384 to 1402 traverse the membrane as a helical segment; it reads ILYNINMIFIIIFTGECVL. The Cytoplasmic portion of the chain corresponds to 1403–1414; the sequence is KMLALRQYYFTV. A helical membrane pass occupies residues 1415–1432; it reads GWNIFDFVVVILSIVGLA. At 1433-1445 the chain is on the extracellular side; sequence LSDLIQKYFVSPT. A helical transmembrane segment spans residues 1446-1462; it reads LFRVIRLARIGRVLRLI. Residues 1463–1481 lie on the Cytoplasmic side of the membrane; the sequence is RGAKGIRTLLFALMMSLPA. The helical transmembrane segment at 1482 to 1499 threads the bilayer; that stretch reads LFNIGLLLFLVMFIYSIF. The Extracellular portion of the chain corresponds to 1500-1521; sequence GMSNFAYVKKESGIDDMFNFET. The segment at residues 1522-1544 is an intramembrane region (pore-forming); it reads FGNSIICLFEITTSAGWDGLLNP. The Extracellular segment spans residues 1545 to 1574; it reads ILNSGPPDCDPNLENPGTSVKGDCGNPSIG. C1553 and C1568 form a disulfide bridge. Residues 1575 to 1597 traverse the membrane as a helical segment; that stretch reads ICFFCSYIIISFLIVVNMYIAII. At 1598–1836 the chain is on the cytoplasmic side; the sequence is LENFNVATEE…VRPGVKESLV (239 aa). Positions 1727 to 1756 constitute an IQ domain; sequence EEVCAIKIQRAYRRHLLQRSMKQASYMYRH. The interval 1778 to 1836 is disordered; the sequence is KMYGHENGNSSSPSPEEKGEAGDAGPTMGLMPISPSDTAWPPAPPPGQTVRPGVKESLV.

This sequence belongs to the sodium channel (TC 1.A.1.10) family. Nav1.4/SCN4A subfamily. The Nav1.4 voltage-gated sodium channel consists of an ion-conducting alpha subunit SCN4A which is functional on its own and a regulatory beta subunit SCN1B. SCN1B strongly enhances the presence of SCN4A at the cell surface. SCN1B is also required for rapid channel inactivation and recovery after inactivation. It prevents the decrease of channel activity in response to repetitive, high-frequency depolarizations. Interacts with the syntrophins SNTA1, SNTB1 and SNTB2 (via PDZ domain); probably links SCN4A to the actin cytoskeleton and the extracellular matrix via the dystrophin-associated protein complex and regulates its localization in muscle cells. Interacts with TMEM233; probable regulator of the channel.

It is found in the cell membrane. The enzyme catalyses Na(+)(in) = Na(+)(out). The channel is inhibited by tetrodotoxin and saxitoxin. Inhibited by the conotoxin GVIIJ. Pore-forming subunit of Nav1.4, a voltage-gated sodium (Nav) channel that directly mediates the depolarizing phase of action potentials in excitable membranes. Navs, also called VGSCs (voltage-gated sodium channels) or VDSCs (voltage-dependent sodium channels), operate by switching between closed and open conformations depending on the voltage difference across the membrane. In the open conformation they allow Na(+) ions to selectively pass through the pore, along their electrochemical gradient. The influx of Na+ ions provokes membrane depolarization, initiating the propagation of electrical signals throughout cells and tissues. Highly expressed in skeletal muscles, Nav1.4 generates the action potential crucial for muscle contraction. The sequence is that of Sodium channel protein type 4 subunit alpha from Homo sapiens (Human).